A 309-amino-acid polypeptide reads, in one-letter code: tRNA dimethylallyltransferase (309 aa).

An ATP-binding site is contributed by 9–16 (GPTAVGKT). Residue 11–16 (TAVGKT) coordinates substrate. An interaction with substrate tRNA region spans residues 34–37 (DSMQ).

It belongs to the IPP transferase family. In terms of assembly, monomer. Mg(2+) is required as a cofactor.

It catalyses the reaction adenosine(37) in tRNA + dimethylallyl diphosphate = N(6)-dimethylallyladenosine(37) in tRNA + diphosphate. Catalyzes the transfer of a dimethylallyl group onto the adenine at position 37 in tRNAs that read codons beginning with uridine, leading to the formation of N6-(dimethylallyl)adenosine (i(6)A). The chain is tRNA dimethylallyltransferase from Clostridium acetobutylicum (strain ATCC 824 / DSM 792 / JCM 1419 / IAM 19013 / LMG 5710 / NBRC 13948 / NRRL B-527 / VKM B-1787 / 2291 / W).